Here is a 397-residue protein sequence, read N- to C-terminus: Putative F-box protein At1g26510 (397 aa).

The segment at 1-23 is disordered; the sequence is MRTRSKKTKTVNNNNDLQKSEEK. The F-box domain occupies 24-71; sequence QKFDQLPLDLEIEMFRRLPLKSVARFLTLSKSCATTIRSPSFITSFPS.

This Arabidopsis thaliana (Mouse-ear cress) protein is Putative F-box protein At1g26510.